The sequence spans 482 residues: O-methyltransferase tpcA (482 aa).

S-adenosyl-L-methionine-binding positions include 293-294, aspartate 316, 348-349, and arginine 364; these read GG and SF. Histidine 368 functions as the Proton acceptor in the catalytic mechanism.

The protein belongs to the class I-like SAM-binding methyltransferase superfamily. Cation-independent O-methyltransferase family. In terms of tissue distribution, specifically expressed in conidia.

It participates in secondary metabolite biosynthesis. Its function is as follows. O-methyltransferase; part of the gene cluster that mediates the biosynthesis of trypacidin, a mycotoxin with antiprotozoal activity and that plays a role in the infection process. The pathway begins with the synthesis of atrochrysone thioester by the polyketide synthase (PKS) tpcC. The atrochrysone carboxyl ACP thioesterase tpcB then breaks the thioester bond and releases the atrochrysone carboxylic acid from tpcC. The decarboxylase tpcK converts atrochrysone carboxylic acid to atrochrysone which is further reduced into emodin anthrone. The next step is performed by the emodin anthrone oxygenase tpcL that catalyzes the oxidation of emodinanthrone to emodin. Emodin O-methyltransferase encoded by tpcA catalyzes methylation of the 8-hydroxy group of emodin to form questin. Ring cleavage of questin by questin oxidase tpcI leads to desmethylsulochrin via several intermediates including questin epoxide. Another methylation step catalyzed by tpcM leads to the formation of sulochrin which is further converted to monomethylsulfochrin by tpcH. Finally, the tpcJ catalyzes the conversion of monomethylsulfochrin to trypacidin. Trypacidin is toxic for human pulmonary and bronchial epithelial cells by initiating the intracellular formation of nitric oxide (NO) and hydrogen peroxide (H(2)O(2)), thus triggering host necrotic cell death. The trypacidin pathway is also able to produce endocrocin via a distinct route from the endocrocin Enc pathway. The polypeptide is O-methyltransferase tpcA (Aspergillus fumigatus (strain ATCC MYA-4609 / CBS 101355 / FGSC A1100 / Af293) (Neosartorya fumigata)).